Consider the following 446-residue polypeptide: Deoxyguanosinetriphosphate triphosphohydrolase-like protein (446 aa).

Residues 1 to 28 (MSSSVWQERRHGEDKQRRNDHRSPFQRD) are disordered. The span at 7–28 (QERRHGEDKQRRNDHRSPFQRD) shows a compositional bias: basic and acidic residues. Positions 59 to 252 (RLTHSLEVSQ…MELADDIAYA (194 aa)) constitute an HD domain.

This sequence belongs to the dGTPase family. Type 2 subfamily.

The polypeptide is Deoxyguanosinetriphosphate triphosphohydrolase-like protein (Shewanella sp. (strain ANA-3)).